Here is a 505-residue protein sequence, read N- to C-terminus: Lysine--tRNA ligase (505 aa).

Mg(2+)-binding residues include E415 and E422.

It belongs to the class-II aminoacyl-tRNA synthetase family. Homodimer. Requires Mg(2+) as cofactor.

The protein localises to the cytoplasm. It carries out the reaction tRNA(Lys) + L-lysine + ATP = L-lysyl-tRNA(Lys) + AMP + diphosphate. The chain is Lysine--tRNA ligase from Enterobacter sp. (strain 638).